We begin with the raw amino-acid sequence, 210 residues long: Homeobox protein Rhox5 (210 aa).

A disordered region spans residues 29–117; the sequence is KAEAFLQAGE…KNGKPEDRQM (89 aa). Positions 117 to 175 form a DNA-binding region, homeobox; atypical; that stretch reads MPLQGSRFAQQRLSELQSILQRTNSFDVPREDLYRLMDTCVARVQNWFKIRRAAARRNR.

The protein localises to the nucleus. Transcription factor required for differentiation of embryonic stem cells (ESCs) into primordial germ cells. This is Homeobox protein Rhox5 (Rhox5) from Mus minutoides (Southern African pygmy mouse).